We begin with the raw amino-acid sequence, 338 residues long: Heme-dependent oxidative N-demethylase alpha subunit (338 aa).

Residues Y38 and H194 each contribute to the heme b site. R224 functions as the Proton donor in the catalytic mechanism. N226 is a binding site for heme b. Position 266 (E266) interacts with dimethylamine. Residues Y317 and K318 each coordinate heme b.

In terms of assembly, the heme-dependent oxidative N-demethylase (HODM) is a heterotetramer composed of a catalytic alpha subunit, a FMN/2Fe-2S-dependent oxidoreductase beta subunit, a gamma subunit with putative aminotransferase activity, and a delta subunit of unknown function.

It catalyses the reaction dimethylamine + NADPH + O2 + H(+) = methylamine + formaldehyde + NADP(+) + H2O. In terms of biological role, component of the heme-dependent oxidative N-demethylase (HODM) enzyme, that catalyzes the NADPH-dependent oxidation of dimethylamine (DMA) to methylamine (MA) and formaldehyde. Functions in bacterial methylated amine catabolism, linking alkylamine oxidation to the tetrahydrofolate C1 pool. The alpha subunit of HODM binds heme, oxygen and DMA, and serves as the site of the oxidative N-demethylase activity. The chain is Heme-dependent oxidative N-demethylase alpha subunit from Ectopseudomonas mendocina (strain ymp) (Pseudomonas mendocina).